Reading from the N-terminus, the 167-residue chain is Low molecular mass early light-inducible protein HV60, chloroplastic (167 aa).

A chloroplast-targeting transit peptide spans 1 to 33 (MATMMAMSSFAGAAVLPRGSARSLPALGRRTLV). Transmembrane regions (helical) follow at residues 101–121 (GQAW…VPLL) and 145–165 (FAMI…TPFI).

It belongs to the ELIP/psbS family.

The protein resides in the plastid. The protein localises to the chloroplast membrane. Its function is as follows. Probably involved in the integration of pigments into the mature pigment-protein complexes. This chain is Low molecular mass early light-inducible protein HV60, chloroplastic, found in Hordeum vulgare (Barley).